The following is a 485-amino-acid chain: Glutamyl-tRNA(Gln) amidotransferase subunit A (485 aa).

Catalysis depends on charge relay system residues Lys78 and Ser153. Ser177 functions as the Acyl-ester intermediate in the catalytic mechanism.

The protein belongs to the amidase family. GatA subfamily. In terms of assembly, heterotrimer of A, B and C subunits.

The catalysed reaction is L-glutamyl-tRNA(Gln) + L-glutamine + ATP + H2O = L-glutaminyl-tRNA(Gln) + L-glutamate + ADP + phosphate + H(+). Its function is as follows. Allows the formation of correctly charged Gln-tRNA(Gln) through the transamidation of misacylated Glu-tRNA(Gln) in organisms which lack glutaminyl-tRNA synthetase. The reaction takes place in the presence of glutamine and ATP through an activated gamma-phospho-Glu-tRNA(Gln). This is Glutamyl-tRNA(Gln) amidotransferase subunit A from Geobacter sulfurreducens (strain ATCC 51573 / DSM 12127 / PCA).